A 184-amino-acid chain; its full sequence is Ribosome-recycling factor (184 aa).

It belongs to the RRF family.

Its subcellular location is the cytoplasm. Responsible for the release of ribosomes from messenger RNA at the termination of protein biosynthesis. May increase the efficiency of translation by recycling ribosomes from one round of translation to another. The polypeptide is Ribosome-recycling factor (Mycoplasma pneumoniae (strain ATCC 29342 / M129 / Subtype 1) (Mycoplasmoides pneumoniae)).